A 794-amino-acid chain; its full sequence is Signal transducer and activator of transcription 5A (794 aa).

At Tyr90 the chain carries Phosphotyrosine. Ser129 is subject to Phosphoserine. Positions 589–686 constitute an SH2 domain; that stretch reads WNDGAILGFV…EVFSKYYTPV (98 aa). Residue Tyr682 is modified to Phosphotyrosine. Tyr694 carries the post-translational modification Phosphotyrosine; by JAK2. Residues 765-794 form a disordered region; sequence EELLRRPNGQSGPLSPPPAGLFTPARGSLS.

Belongs to the transcription factor STAT family. Forms a homodimer or a heterodimer with a related family member. Binds NR3C1. Interacts with NCOA1 and SOCS7. Interacts with ERBB4. Interacts with EBF4. Interacts with CD69. Post-translationally, ISGylated. Tyrosine phosphorylated in response to KITLG/SCF, IL2, IL3, IL7, IL15, CSF2/GMCSF, GH1, PRL, EPO and THPO. Activated KIT promotes phosphorylation on tyrosine residues and subsequent translocation to the nucleus. Tyrosine phosphorylated in response to constitutively activated FGFR1, FGFR2, FGFR3 and FGFR4. Tyrosine phosphorylation is required for DNA-binding activity and dimerization. Serine phosphorylation is also required for maximal transcriptional activity. Tyrosine phosphorylated in response to signaling via activated FLT3; wild-type FLT3 results in much weaker phosphorylation than constitutively activated mutant FLT3. Alternatively, can be phosphorylated by JAK2 at Tyr-694. As to expression, found in mammary gland and, in lesser extent, in ovary, thymus, spleen, kidney, lung, muscle and adrenal gland.

It is found in the cytoplasm. The protein localises to the nucleus. Functionally, carries out a dual function: signal transduction and activation of transcription. Mediates cellular responses to the cytokine KITLG/SCF and other growth factors. May mediate cellular responses to activated FGFR1, FGFR2, FGFR3 and FGFR4. Binds to the GAS element and activates PRL-induced transcription. Regulates the expression of milk proteins during lactation. This is Signal transducer and activator of transcription 5A (STAT5A) from Ovis aries (Sheep).